A 178-amino-acid chain; its full sequence is GTP-dependent dephospho-CoA kinase (178 aa).

GTP is bound by residues Asp55, Val57, Asp74, Lys76, and Glu127.

It belongs to the GTP-dependent DPCK family.

The enzyme catalyses 3'-dephospho-CoA + GTP = GDP + CoA + H(+). Its pathway is cofactor biosynthesis; coenzyme A biosynthesis. Its function is as follows. Catalyzes the GTP-dependent phosphorylation of the 3'-hydroxyl group of dephosphocoenzyme A to form coenzyme A (CoA). The protein is GTP-dependent dephospho-CoA kinase of Saccharolobus islandicus (strain Y.N.15.51 / Yellowstone #2) (Sulfolobus islandicus).